A 389-amino-acid chain; its full sequence is Mannitol-1-phosphate 5-dehydrogenase (389 aa).

NAD(+) is bound at residue 5–16; it reads AVHFGAGNIGRG. K215 is a catalytic residue.

It belongs to the mannitol dehydrogenase family. In terms of assembly, monomer.

The catalysed reaction is D-mannitol 1-phosphate + NAD(+) = beta-D-fructose 6-phosphate + NADH + H(+). Functionally, catalyzes the NAD(H)-dependent interconversion of D-fructose 6-phosphate and D-mannitol 1-phosphate in the mannitol metabolic pathway. This chain is Mannitol-1-phosphate 5-dehydrogenase, found in Sclerotinia sclerotiorum (strain ATCC 18683 / 1980 / Ss-1) (White mold).